Reading from the N-terminus, the 63-residue chain is Large ribosomal subunit protein uL30 (63 aa).

It belongs to the universal ribosomal protein uL30 family. In terms of assembly, part of the 50S ribosomal subunit.

The polypeptide is Large ribosomal subunit protein uL30 (Bradyrhizobium sp. (strain BTAi1 / ATCC BAA-1182)).